Consider the following 432-residue polypeptide: MTNVVVVGSQWGDEGKGKIVDWLSERADVVVRFQGGHNAGHTLVIDGISYKLSLLPSGVVRPGKMAVIGNGVVVDPHALIAEIAKLAAQGVTVTPDNLRIADNATLILSLHRELDGMREDAATNSGTKIGTTRRGIGPAYEDKVGRRAIRVMDLADPEGLAEKVARILPHHNALRRGFGAPEVEHSTIMEELLSVADKVLPFRETVWLMLDKERRRGARILFEGAQGSLLDIDHGTYPFVTSSNTVAGQAAAGSGMGPGSLGYILGITKAYTTRVGEGPFPTELTDEVGQFLGEKGHEFGTVTGRKRRCGWFDAALVRQSVATNGITGIALTKLDVLDGLDELKICVGYKLDGVEIDHLPAAQAAQARVEPIYVTLEGWKESTVGARKWADLPAQAIKYVRQVEELIGAPVALLSTSPERDDTILVTDPFED.

GTP is bound by residues 12-18 (GDEGKGK) and 40-42 (GHT). Residue Asp-13 is the Proton acceptor of the active site. Mg(2+) contacts are provided by Asp-13 and Gly-40. IMP contacts are provided by residues 13 to 16 (DEGK), 38 to 41 (NAGH), Thr-132, Arg-146, Gln-226, Thr-241, and Arg-305. His-41 acts as the Proton donor in catalysis. Position 301 to 307 (301 to 307 (TVTGRKR)) interacts with substrate. GTP-binding positions include Arg-307, 333-335 (KLD), and 415-417 (STS).

Belongs to the adenylosuccinate synthetase family. As to quaternary structure, homodimer. Mg(2+) serves as cofactor.

The protein resides in the cytoplasm. It carries out the reaction IMP + L-aspartate + GTP = N(6)-(1,2-dicarboxyethyl)-AMP + GDP + phosphate + 2 H(+). The protein operates within purine metabolism; AMP biosynthesis via de novo pathway; AMP from IMP: step 1/2. Plays an important role in the de novo pathway of purine nucleotide biosynthesis. Catalyzes the first committed step in the biosynthesis of AMP from IMP. The polypeptide is Adenylosuccinate synthetase (Allorhizobium ampelinum (strain ATCC BAA-846 / DSM 112012 / S4) (Agrobacterium vitis (strain S4))).